The following is a 270-amino-acid chain: Glutamate racemase (270 aa).

Residues 10 to 11 (DS) and 42 to 43 (YG) each bind substrate. Cys-74 (proton donor/acceptor) is an active-site residue. 75–76 (NT) provides a ligand contact to substrate. The Proton donor/acceptor role is filled by Cys-189. 190-191 (TH) contacts substrate.

It belongs to the aspartate/glutamate racemases family.

The enzyme catalyses L-glutamate = D-glutamate. It participates in cell wall biogenesis; peptidoglycan biosynthesis. In terms of biological role, provides the (R)-glutamate required for cell wall biosynthesis. The sequence is that of Glutamate racemase from Bartonella quintana (strain Toulouse) (Rochalimaea quintana).